The sequence spans 132 residues: Ubiquinol-cytochrome c reductase complex assembly factor 4 (132 aa).

A signal peptide spans 1–15 (MNRVLCAPAAGAVRA). The Mitochondrial matrix portion of the chain corresponds to 16–78 (LRLIGRTSRS…GKGHQRPWWK (63 aa)). Residues 24 to 73 (RSLHPLPGSRDRAHPAAEEQDDPDRPTEFSSSKANPRRWSVGHSMGKGHQ) are disordered. A compositionally biased stretch (basic and acidic residues) spans 32-50 (SRDRAHPAAEEQDDPDRPT). Residues 79–95 (VLPLSCFLVALIIWCYL) form a helical membrane-spanning segment. The Mitochondrial intermembrane portion of the chain corresponds to 96-132 (REESEADQWLRQVWGEVPEPSDRSEEPETPAAYRART). Residues 110–132 (GEVPEPSDRSEEPETPAAYRART) are disordered.

This sequence belongs to the UQCC4 family. As to quaternary structure, forms a complex, named COMB/coordinator of mitochondrial CYTB biogenesis, composed of UQCC1, UQCC2, UQCC4, UQCC5 and UQCC6; stabilizes nascent cytochrome b/MT-CYB and promotes its membrane insertion. Forms a complex, named COMA, composed of UQCC1, UQCC2 and UQCC4; activates MT-CYB translation. Forms a complex, named COMC, composed of UQCC1, UQCC2; UQCC3 and UQCC4; mediates MT-CYB hemylation and association with the first nuclear-encoded complex III subunit UQCRQ. Complexes COMA and COMB are bound to the mitochondrion inner membrane by UQCC4.

It localises to the mitochondrion inner membrane. Its function is as follows. Required for the assembly and stability of the mitochondrial ubiquinol-cytochrome c reductase complex (complex III (CIII) or cytochrome b-c1 complex), a multisubunit transmembrane complex that is part of the mitochondrial electron transport chain (ETC) which drives oxidative phosphorylation. The sequence is that of Ubiquinol-cytochrome c reductase complex assembly factor 4 (UQCC4) from Pongo abelii (Sumatran orangutan).